We begin with the raw amino-acid sequence, 470 residues long: ATP synthase subunit beta (470 aa).

155–162 (GGAGVGKT) provides a ligand contact to ATP.

Belongs to the ATPase alpha/beta chains family. As to quaternary structure, F-type ATPases have 2 components, CF(1) - the catalytic core - and CF(0) - the membrane proton channel. CF(1) has five subunits: alpha(3), beta(3), gamma(1), delta(1), epsilon(1). CF(0) has three main subunits: a(1), b(2) and c(9-12). The alpha and beta chains form an alternating ring which encloses part of the gamma chain. CF(1) is attached to CF(0) by a central stalk formed by the gamma and epsilon chains, while a peripheral stalk is formed by the delta and b chains.

It localises to the cell membrane. The enzyme catalyses ATP + H2O + 4 H(+)(in) = ADP + phosphate + 5 H(+)(out). Produces ATP from ADP in the presence of a proton gradient across the membrane. The catalytic sites are hosted primarily by the beta subunits. The sequence is that of ATP synthase subunit beta from Staphylococcus saprophyticus subsp. saprophyticus (strain ATCC 15305 / DSM 20229 / NCIMB 8711 / NCTC 7292 / S-41).